Here is a 176-residue protein sequence, read N- to C-terminus: Ribosome maturation factor RimM (176 aa).

Positions Ala99–Leu173 constitute a PRC barrel domain.

The protein belongs to the RimM family. In terms of assembly, binds ribosomal protein uS19.

Its subcellular location is the cytoplasm. Functionally, an accessory protein needed during the final step in the assembly of 30S ribosomal subunit, possibly for assembly of the head region. Essential for efficient processing of 16S rRNA. May be needed both before and after RbfA during the maturation of 16S rRNA. It has affinity for free ribosomal 30S subunits but not for 70S ribosomes. This is Ribosome maturation factor RimM from Trichlorobacter lovleyi (strain ATCC BAA-1151 / DSM 17278 / SZ) (Geobacter lovleyi).